We begin with the raw amino-acid sequence, 427 residues long: MAKINELLRESTTTNSNSIGRPNLVALTRATTKLIYSDIVATQRTNQPVAAFYGIKYLNPDNEFTFKTGATYAGEAGYVDREQITELTEESKLTLNKGDLFKYNNIVYKVLEDTPFATIEESDLELALQIAIVLLKVRLFSDAASTSKFESSDSEIADARFQINKWQTAVKSRKLKTGITVELAQDLEANGFDAPNFLEDLLATEMADEINKDILQSLITVSKRYKVTGITDSGFIDLSYASAPEAGRSLYRMVCEMVSHIQKESTYTATFCVASARAAAILAASGWLKHKPEDDKYLSQNAYGFLANGLPLYCDTNSPLDYVIVGVVENIGEKEIVGSIFYAPYTEGLDLDDPEHVGAFKVVVDPESLQPSIGLLVRYALSANPYTVAKDEKEARIIDGGDMDKMAGRSDLSVLLGVKLPKIIIDE.

It belongs to the Tevenvirinae capsid vertex family. In terms of assembly, homopentamer. Interacts with the portal protein. Interacts with the major capsid protein that forms 160 hexamers. Post-translationally, proteolytic cleavage at the N-terminus by the prohead core protein protease gives rise to the mature capsid vertex protein.

The protein resides in the virion. Functionally, capsid protein that self-associates to form pentons, building the capsid in association with hexamers of the major capsid protein and one dodecamer of the portal protein. The capsid vertex protein self-associates to form 11 pentons, building the T=13 laevo capsid in association with 160 hexamers of the major capsid protein. In Escherichia coli (Bacteriophage T4), this protein is Capsid vertex protein (24).